Reading from the N-terminus, the 163-residue chain is uncharacterized protein (163 aa).

Residues methionine 1 to threonine 33 lie on the Cytoplasmic side of the membrane. A helical membrane pass occupies residues cysteine 34–phenylalanine 54. Topologically, residues glutamate 55–aspartate 117 are extracellular. The helical transmembrane segment at valine 118 to phenylalanine 138 threads the bilayer. Residues glutamate 139–leucine 163 are Cytoplasmic-facing.

It localises to the membrane. This is an uncharacterized protein from Saccharomyces cerevisiae (strain ATCC 204508 / S288c) (Baker's yeast).